The chain runs to 415 residues: MVPVLLILVGALATLQADLLNHKKFLLLPPVNFTIKATGLAQVLLHWDPNPDQEQRHVDLEYHVKINAPQEDEYDTRKTESKCVTPLHEGFAASVRTILKSSHTTLASSWVSAELKAPPGSPGTSVTNLTCTTHTVVSSHTHLRPYQVSLRCTWLVGKDAPEDTQYFLYYRFGVLTEKCQEYSRDALNRNTACWFPRTFINSKGFEQLAVHINGSSKRAAIKPFDQLFSPLAIDQVNPPRNVTVEIESNSLYIQWEKPLSAFPDHCFNYELKIYNTKNGHIQKEKLIANKFISKIDDVSTYSIQVRAAVSSPCRMPGRWGEWSQPIYVGKERKSLVEWHLIVLPTAACFVLLIFSLICRVCHLWTRLFPPVPAPKSNIKDLPVVTEYEKPSNETKIEVVHCVEEVGFEVMGNSTF.

An N-terminal signal peptide occupies residues 1–17 (MVPVLLILVGALATLQA). At 18–339 (DLLNHKKFLL…KERKSLVEWH (322 aa)) the chain is on the extracellular side. One can recognise a Fibronectin type-III 1 domain in the interval 29 to 120 (PPVNFTIKAT…VSAELKAPPG (92 aa)). N-linked (GlcNAc...) asparagine glycans are attached at residues Asn32 and Asn128. 2 cysteine pairs are disulfide-bonded: Cys131–Cys152 and Cys179–Cys193. Residues Asn213 and Asn241 are each glycosylated (N-linked (GlcNAc...) asparagine). The Fibronectin type-III 2 domain maps to 238-331 (PPRNVTVEIE…WSQPIYVGKE (94 aa)). The cysteines at positions 266 and 313 are disulfide-linked. The WSXWS motif motif lies at 319 to 323 (WGEWS). Residues 340–361 (LIVLPTAACFVLLIFSLICRVC) form a helical membrane-spanning segment. The Cytoplasmic segment spans residues 362–415 (HLWTRLFPPVPAPKSNIKDLPVVTEYEKPSNETKIEVVHCVEEVGFEVMGNSTF). Residues 367–375 (LFPPVPAPK) carry the Box 1 motif motif.

Interacts with IL5. Interacts with CSF2RB. Interacts with JAK2. Interacts with SDCBP. Expressed on eosinophils and basophils. Also on B-cells.

It localises to the membrane. In terms of biological role, cell surface receptor that plays an important role in the survival, differentiation, and chemotaxis of eosinophils. Acts by forming a heterodimeric receptor with CSF2RB subunit and subsequently binding to interleukin-5. In unstimulated conditions, interacts constitutively with JAK2. Heterodimeric receptor activation leads to JAK2 stimulation and subsequent activation of the JAK-STAT pathway. This Mus musculus (Mouse) protein is Interleukin-5 receptor subunit alpha (Il5ra).